Here is a 129-residue protein sequence, read N- to C-terminus: uncharacterized protein (129 aa).

This is an uncharacterized protein from Mycobacterium bovis (strain ATCC BAA-935 / AF2122/97).